Here is a 243-residue protein sequence, read N- to C-terminus: MSDMAMIRIGILIAGLLLVAAIFLFGRPKKSPQGRRVDKGEGQPRERREPVISSEFGAEGDAAERAEGVEQSELNLEGQDASGGNEVGKRPNQDFDKIVSLFVAAKAGQVLRGEDVVVVAEKTGLVFGHMNVFHRLVEGHPERGPIFSMASILKPGSFDMANIREMQTPAIAFFLTLPAPMTALDAWEKMLPTVQRMAELLDGVVLDDSRNALGRQRVAHIRDELRAYDRQHQAPPLTKSPRW.

The Periplasmic segment spans residues 1–4 (MSDM). Residues 5–25 (AMIRIGILIAGLLLVAAIFLF) form a helical membrane-spanning segment. At 26-243 (GRPKKSPQGR…APPLTKSPRW (218 aa)) the chain is on the cytoplasmic side. A disordered region spans residues 30–89 (KSPQGRRVDKGEGQPRERREPVISSEFGAEGDAAERAEGVEQSELNLEGQDASGGNEVGK). Basic and acidic residues predominate over residues 35 to 50 (RRVDKGEGQPRERREP).

This sequence belongs to the ZipA family. Interacts with FtsZ via their C-terminal domains.

It is found in the cell inner membrane. In terms of biological role, essential cell division protein that stabilizes the FtsZ protofilaments by cross-linking them and that serves as a cytoplasmic membrane anchor for the Z ring. Also required for the recruitment to the septal ring of downstream cell division proteins. This Xanthomonas axonopodis pv. citri (strain 306) protein is Cell division protein ZipA.